The primary structure comprises 298 residues: N-acetylmuramic acid 6-phosphate etherase (298 aa).

The 164-residue stretch at 55 to 218 folds into the SIS domain; it reads ASKRYREGGR…STGVMIKQGK (164 aa). The Proton donor role is filled by Glu-83. The active site involves Glu-114.

The protein belongs to the GCKR-like family. MurNAc-6-P etherase subfamily. Homodimer.

The catalysed reaction is N-acetyl-D-muramate 6-phosphate + H2O = N-acetyl-D-glucosamine 6-phosphate + (R)-lactate. Its pathway is amino-sugar metabolism; N-acetylmuramate degradation. Its function is as follows. Specifically catalyzes the cleavage of the D-lactyl ether substituent of MurNAc 6-phosphate, producing GlcNAc 6-phosphate and D-lactate. The sequence is that of N-acetylmuramic acid 6-phosphate etherase from Lactobacillus johnsonii (strain CNCM I-12250 / La1 / NCC 533).